The following is a 199-amino-acid chain: 7-methyl-GTP pyrophosphatase (199 aa).

The Proton acceptor role is filled by Asp73.

It belongs to the Maf family. YceF subfamily. A divalent metal cation is required as a cofactor.

The protein localises to the cytoplasm. It carries out the reaction N(7)-methyl-GTP + H2O = N(7)-methyl-GMP + diphosphate + H(+). Functionally, nucleoside triphosphate pyrophosphatase that hydrolyzes 7-methyl-GTP (m(7)GTP). May have a dual role in cell division arrest and in preventing the incorporation of modified nucleotides into cellular nucleic acids. This is 7-methyl-GTP pyrophosphatase from Bordetella bronchiseptica (strain ATCC BAA-588 / NCTC 13252 / RB50) (Alcaligenes bronchisepticus).